The chain runs to 365 residues: Terpene cyclase DEP1 (365 aa).

Transmembrane regions (helical) follow at residues 10-30, 82-102, 116-136, 158-178, 188-208, 233-253, 297-317, and 338-358; these read LYLSALGVWGLWGYAYFNGMF, LLFFDINYAVACTNLWTLIES, AWAMVLCNANGAAIVLPIYLY, LPIITVVMLLQPLLIFAPAWF, ALIALFQVAPVIVLGLYVGIT, LILAGSVASAVHIYTLTGALF, LFSQWDWIVVCLTSVVYAQLL, and MIYLTIATVVLGPGGAGSFAL.

This sequence belongs to the membrane-bound ascI terpene cyclase family.

The protein resides in the membrane. Its pathway is polyketide biosynthesis. Functionally, part of the gene cluster that mediates the biosynthesis of depudecin, a highly oxidized eleven-carbon linear polyketide that acts as a histone deacetylase (HDAC) inhibitor and makes a small contribution to pathogenesis. The reducing polyketide synthase DEP5 is the central enzyme in depudecin biosynthesis by yielding the backbone polyketide chain. The monooxygenases DEP2 and DEP4, as well as the uncharacterized protein DEP1, then act as tailoring enzymes to modify the intermediate polyketide chain into depudecin. The protein is Terpene cyclase DEP1 of Fusarium langsethiae.